The primary structure comprises 718 residues: MSNESKCPFSGHNSKPQVTVGGGTANLHWWPNQLRVDLLNQHSERSNPLGKDFNYRQEFKKLDYYALKADIKNVLTDSQDWWPADWGNYTGLFIRLAWHAAGTYRMGDGRGGAGRGQQRFAPLNSWPDNASLDKARRLLWPVKQKYGQKISWADLFILAGNIALESSGFRTFGFGAGREDVWEPDNDVNWGDEKEWLAHRNSEALAGSNLAATEMGLIYVNPEGPQASGDPRSAAPFIRATFGNMAMDDEEIVALIAGGHTLGKTHGAAPADHVQADPEGAPIEQMGFGWANSYGTGVGKDAITSGLEVIWSQTPTQWSNYFFENLFKYEWVQERSPAGAIQWVAADAEAIIPDPFDPSIKRKPTMLTTDLTLRFDPEFEKISRRFLNDPQAFANAFARAWFKLTHRDMGPKARYLGPEVPTEDLIWQDPLPAASATPSSASIADAKAKIVALGLPAGELVSLAWASASTFRGGDKRGGANGARIALSPQREWEVNKKAVETLTKIEELKASTQLSLADLIVLAGNVGVEQAAQAAGFNITVPFAPGRVDALQSQTDVESFQLLLGLADGFRNWKKQGVNTPAEVLLIDKAQQLTLTAPELTALIGGLRVLGTNWDGSQHGVFTQQVGVLSTDFFTNLLDMSNVWAPVDSTSEVFEGKDRKSGTVKFTATRNDLVFGSNSILRALAEVYAQADGKEKFVQDFVAAWTKVMNLDRFDLA.

The tryptophyl-tyrosyl-methioninium (Trp-Tyr) (with M-245) cross-link spans 98 to 219 (WHAAGTYRMG…LAATEMGLIY (122 aa)). Histidine 99 serves as the catalytic Proton acceptor. The tryptophyl-tyrosyl-methioninium (Tyr-Met) (with W-98) cross-link spans 219–245 (YVNPEGPQASGDPRSAAPFIRATFGNM). A heme b-binding site is contributed by histidine 260.

It belongs to the peroxidase family. Peroxidase/catalase subfamily. Homodimer or homotetramer. Requires heme b as cofactor. Post-translationally, formation of the three residue Trp-Tyr-Met cross-link is important for the catalase, but not the peroxidase activity of the enzyme.

The catalysed reaction is H2O2 + AH2 = A + 2 H2O. The enzyme catalyses 2 H2O2 = O2 + 2 H2O. Its function is as follows. Bifunctional enzyme with both catalase and broad-spectrum peroxidase activity. The protein is Catalase-peroxidase of Acinetobacter baumannii (strain AB307-0294).